Reading from the N-terminus, the 262-residue chain is Shikimate dehydrogenase (NADP(+)) (262 aa).

Residues 15–17 and threonine 62 contribute to the shikimate site; that span reads SRS. The active-site Proton acceptor is lysine 66. Position 78 (glutamate 78) interacts with NADP(+). Shikimate-binding residues include asparagine 87 and aspartate 102. NADP(+) is bound by residues 126 to 130, 150 to 155, and methionine 214; these read GAGGA and NRTLAR. Residue tyrosine 216 coordinates shikimate. Glycine 236 serves as a coordination point for NADP(+).

The protein belongs to the shikimate dehydrogenase family. Homodimer.

The enzyme catalyses shikimate + NADP(+) = 3-dehydroshikimate + NADPH + H(+). The protein operates within metabolic intermediate biosynthesis; chorismate biosynthesis; chorismate from D-erythrose 4-phosphate and phosphoenolpyruvate: step 4/7. In terms of biological role, involved in the biosynthesis of the chorismate, which leads to the biosynthesis of aromatic amino acids. Catalyzes the reversible NADPH linked reduction of 3-dehydroshikimate (DHSA) to yield shikimate (SA). The chain is Shikimate dehydrogenase (NADP(+)) from Acinetobacter baumannii (strain SDF).